The sequence spans 405 residues: mRNA cap guanine-N(7) methyltransferase (405 aa).

Positions 1 to 78 (MDNILNPEDN…PRLEEGHGSL (78 aa)) are disordered. Polar residues-rich tracts occupy residues 9–18 (DNVSQTNTET) and 36–45 (KFTASGQNLD). A compositionally biased stretch (basic and acidic residues) spans 58 to 75 (KAGEPESPSKRPRLEEGH). An mRNA cap 0 methyltransferase domain is found at 97 to 404 (SRIFHLRNFN…IYLLFAFEKQ (308 aa)). 106 to 107 (NN) contributes to the mRNA binding site. The S-adenosyl-L-methionine site is built by Lys-110, Gly-134, Asp-156, Asp-190, Gln-213, and Tyr-218.

It belongs to the class I-like SAM-binding methyltransferase superfamily. mRNA cap 0 methyltransferase family.

The protein resides in the nucleus. The catalysed reaction is a 5'-end (5'-triphosphoguanosine)-ribonucleoside in mRNA + S-adenosyl-L-methionine = a 5'-end (N(7)-methyl 5'-triphosphoguanosine)-ribonucleoside in mRNA + S-adenosyl-L-homocysteine. Catalytic subunit of the mRNA-capping methyltransferase RNMT:RAMAC complex that methylates the N7 position of the added guanosine to the 5'-cap structure of mRNAs. Binds RNA containing 5'-terminal GpppC. This Xenopus tropicalis (Western clawed frog) protein is mRNA cap guanine-N(7) methyltransferase (rnmt).